A 45-amino-acid polypeptide reads, in one-letter code: Photosystem II reaction center protein K (45 aa).

Residues 1-8 (METIYLLA) constitute a propeptide that is removed on maturation. A helical membrane pass occupies residues 16-40 (IFDPLVDVLPVIPLFFLALAFVWQA).

Belongs to the PsbK family. In terms of assembly, PSII is composed of 1 copy each of membrane proteins PsbA, PsbB, PsbC, PsbD, PsbE, PsbF, PsbH, PsbI, PsbJ, PsbK, PsbL, PsbM, PsbT, PsbX, PsbY, PsbZ, Psb30/Ycf12, peripheral proteins PsbO, CyanoQ (PsbQ), PsbU, PsbV and a large number of cofactors. It forms dimeric complexes.

The protein localises to the cellular thylakoid membrane. Functionally, one of the components of the core complex of photosystem II (PSII). PSII is a light-driven water:plastoquinone oxidoreductase that uses light energy to abstract electrons from H(2)O, generating O(2) and a proton gradient subsequently used for ATP formation. It consists of a core antenna complex that captures photons, and an electron transfer chain that converts photonic excitation into a charge separation. This is Photosystem II reaction center protein K from Synechocystis sp. (strain ATCC 27184 / PCC 6803 / Kazusa).